The sequence spans 186 residues: Large ribosomal subunit protein uL22 (186 aa).

The segment at Val161–Glu186 is disordered. Over residues Arg177–Glu186 the composition is skewed to basic and acidic residues.

This sequence belongs to the universal ribosomal protein uL22 family.

This Drosophila pseudoobscura pseudoobscura (Fruit fly) protein is Large ribosomal subunit protein uL22 (RpL17).